The sequence spans 2136 residues: Protein CELLULOSE SYNTHASE INTERACTIVE 3 (2136 aa).

ARM repeat units lie at residues Met27–Ile66, Arg71–Lys111, Lys113–Ser152, His159–Gly201, Asp204–Leu243, Cys246–Ala286, Asp289–Gly337, Pro376–Gly417, Ser419–His458, Val461–Ala500, Asp503–Cys542, Glu545–His584, Ala586–Ser618, Lys619–Ser663, Gln666–Arg705, Asn711–Ser750, Pro752–Lys791, Ser811–Pro848, Pro849–Ser887, Gln936–Glu980, Ser1013–Ser1041, Ala1042–Val1083, Arg1109–Lys1149, Glu1163–Asp1204, Asp1207–Ser1247, His1249–Asp1288, Glu1290–Ser1329, Ser1333–Ser1375, Lys1377–Asp1416, Glu1418–Lys1457, Val1460–Asn1499, Ala1518–Thr1546, Leu1547–Thr1585, Glu1587–Ala1626, Trp1628–Gln1669, Tyr1670–Leu1704, Ala1710–Arg1750, Ser1790–Met1833, Arg1836–Ser1875, Pro1921–His1960, Val1969–Gly2008, and Leu2010–Ile2035. The region spanning Lys1989–Leu2106 is the C2 domain.

In terms of assembly, associates with cellulase synthase (CESA) complexes. Binds to cortical microtubules. Interacts with CESA3 and CESA6. Expressed in dark-grown hypocotyls, leaves (confined to vasculature and trichomes), stamen, pollen, developing siliques, and roots. Restricted in meristematic tissue of the shoot and root. Present in distinct punctae at the cell cortex, called microtubule-associated cellulose synthase compartments, that move with constant velocities of 10 to 3000 nm/min.

The protein localises to the cell membrane. The protein resides in the cytoplasm. Its subcellular location is the cytoskeleton. It is found in the endomembrane system. In terms of biological role, regulator of the microtubular cytoskeleton. Microtubule-associated protein involved in the association of cellulase synthase (CESA) complexes (CSCs) and cortical microtubules. Promotes dynamics of CSCs in the plasma membrane in both microtubules-dependent and microtubules-independent manners. Regulates primary cell wall biosynthesis and cellulose microfibrils organization. This is Protein CELLULOSE SYNTHASE INTERACTIVE 3 from Arabidopsis thaliana (Mouse-ear cress).